A 176-amino-acid polypeptide reads, in one-letter code: Adenine phosphoribosyltransferase (176 aa).

It belongs to the purine/pyrimidine phosphoribosyltransferase family. Homodimer.

Its subcellular location is the cytoplasm. It carries out the reaction AMP + diphosphate = 5-phospho-alpha-D-ribose 1-diphosphate + adenine. Its pathway is purine metabolism; AMP biosynthesis via salvage pathway; AMP from adenine: step 1/1. Its function is as follows. Catalyzes a salvage reaction resulting in the formation of AMP, that is energically less costly than de novo synthesis. In Thermobifida fusca (strain YX), this protein is Adenine phosphoribosyltransferase.